Consider the following 269-residue polypeptide: Phosphate import ATP-binding protein PstB (269 aa).

Positions 21–264 constitute an ABC transporter domain; sequence SEVRNLSFYY…PKNKQTEDYI (244 aa). 53–60 provides a ligand contact to ATP; the sequence is GPSGCGKS.

This sequence belongs to the ABC transporter superfamily. Phosphate importer (TC 3.A.1.7) family. As to quaternary structure, the complex is composed of two ATP-binding proteins (PstB), two transmembrane proteins (PstC and PstA) and a solute-binding protein (PstS).

The protein resides in the cell inner membrane. The catalysed reaction is phosphate(out) + ATP + H2O = ADP + 2 phosphate(in) + H(+). Part of the ABC transporter complex PstSACB involved in phosphate import. Responsible for energy coupling to the transport system. The protein is Phosphate import ATP-binding protein PstB of Nitrosospira multiformis (strain ATCC 25196 / NCIMB 11849 / C 71).